A 206-amino-acid chain; its full sequence is Thymidylate kinase (206 aa).

ATP is bound at residue 11-18; that stretch reads GIDGAGKT.

It belongs to the thymidylate kinase family.

The catalysed reaction is dTMP + ATP = dTDP + ADP. Its function is as follows. Phosphorylation of dTMP to form dTDP in both de novo and salvage pathways of dTTP synthesis. In Paraburkholderia xenovorans (strain LB400), this protein is Thymidylate kinase.